Reading from the N-terminus, the 1390-residue chain is Nuclear pore complex protein Nup155 (1390 aa).

Serine 525 carries an O-linked (GlcNAc) serine glycan. The disordered stretch occupies residues 598-632 (GSPMYSSSPVPTGSPYPNPSSLGTPSHGAQPPTMS). Lysine 739 participates in a covalent cross-link: Glycyl lysine isopeptide (Lys-Gly) (interchain with G-Cter in SUMO2). The segment at 984-1011 (QSKAAPQSPSVPKKPGPPVLSSDPNMLS) is disordered. Residue serine 1056 is modified to Phosphoserine.

Belongs to the non-repetitive/WGA-negative nucleoporin family. As to quaternary structure, interacts with GLE1. Able to form a heterotrimer with GLE1 and NUP42 in vitro. Forms a complex with NUP35, NUP93, NUP205 and lamin B. Phosphorylated. Phosphorylation and dephosphorylation may be important for the function of NUP155 and may play a role in the reversible disassembly of the nuclear pore complex during mitosis. Post-translationally, disulfide-linked to NUP62. The inner channel of the NPC has a different redox environment from the cytoplasm and allows the formation of interchain disulfide bonds between some nucleoporins, the significant increase of these linkages upon oxidative stress reduces the permeability of the NPC.

It is found in the nucleus. The protein resides in the nuclear pore complex. Its subcellular location is the nucleus membrane. Functionally, essential component of nuclear pore complex. Could be essessential for embryogenesis. Nucleoporins may be involved both in binding and translocating proteins during nucleocytoplasmic transport. The chain is Nuclear pore complex protein Nup155 (Nup155) from Rattus norvegicus (Rat).